The chain runs to 337 residues: Vegetative-specific protein H5 (337 aa).

The Involved in the stabilization of the negatively charged intermediate by the formation of the oxyanion hole signature appears at 88–90 (HGG). Catalysis depends on residues Ser-161, Asp-261, and His-291.

It belongs to the 'GDXG' lipolytic enzyme family.

This Dictyostelium discoideum (Social amoeba) protein is Vegetative-specific protein H5 (cinB).